Consider the following 242-residue polypeptide: Platelet-derived growth factor subunit B (242 aa).

Residues 1–20 form the signal peptide; sequence MNRCWALFLSLCCYLRLVSA. Residues 21-81 constitute a propeptide, removed in mature form; it reads EGDPIPEELY…ELESLSRGRR (61 aa). An N-linked (GlcNAc...) asparagine glycan is attached at Asn63. 3 cysteine pairs are disulfide-bonded: Cys97-Cys141, Cys130-Cys178, and Cys134-Cys180. A compositionally biased stretch (basic residues) spans 219–232; sequence PPKGKHRKFKHTHD. Residues 219-242 are disordered; it reads PPKGKHRKFKHTHDKKALKETLGA. The span at 233 to 242 shows a compositional bias: basic and acidic residues; it reads KKALKETLGA.

It belongs to the PDGF/VEGF growth factor family. In terms of assembly, antiparallel homodimer; disulfide-linked. Antiparallel heterodimer with PDGFA; disulfide-linked. The PDGFB homodimer interacts with PDGFRA and PDGFRB homodimers, and with heterodimers formed by PDGFRA and PDGFRB. The heterodimer composed of PDGFA and PDGFB interacts with PDGFRB homodimers, and with heterodimers formed by PDGFRA and PDGFRB. Interacts with XLKD1. Interacts with LRP1. Interacts with SORL1 (via the N-terminal ectodomain). Interacts with CD82; this interaction inhibits PDGFB-mediated signaling pathway.

It localises to the secreted. In terms of biological role, growth factor that plays an essential role in the regulation of embryonic development, cell proliferation, cell migration, survival and chemotaxis. Potent mitogen for cells of mesenchymal origin. Required for normal proliferation and recruitment of pericytes and vascular smooth muscle cells in the central nervous system, skin, lung, heart and placenta. Required for normal blood vessel development, and for normal development of kidney glomeruli. Plays an important role in wound healing. Signaling is modulated by the formation of heterodimers with PDGFA. In Canis lupus familiaris (Dog), this protein is Platelet-derived growth factor subunit B (PDGFB).